The chain runs to 308 residues: Bacitracin transport ATP-binding protein BcrA (308 aa).

Residues 8 to 236 (IETENLTKQY…NRKYTEFDVS (229 aa)) enclose the ABC transporter domain. Residue 40–47 (GRNGAGKT) participates in ATP binding.

Belongs to the ABC transporter superfamily. In terms of assembly, the complex is probably composed of two ATP-binding proteins (BcrA) and two transmembrane proteins (BcrB).

Essential for high-level bacitracin resistance. Part of the ABC transporter complex BcrAB. Probably responsible for energy coupling to the transport system. The chain is Bacitracin transport ATP-binding protein BcrA from Enterococcus faecalis (Streptococcus faecalis).